The primary structure comprises 916 residues: Translation initiation factor IF-2 (916 aa).

Positions 151-191 (NLDEQQRLAESDRARDEAIQRKRDEEQAAKDRVEAERKAAE) are enriched in basic and acidic residues. Disordered stretches follow at residues 151–262 (NLDE…SHVM) and 280–328 (HLSA…ERPT). Composition is skewed to low complexity over residues 192–243 (EAAA…ATPA) and 293–305 (RGKPTGRPGSSSS). Positions 415-584 (SRPPVVTIMG…SLQAEVLELK (170 aa)) constitute a tr-type G domain. A G1 region spans residues 424 to 431 (GHVDHGKT). 424–431 (GHVDHGKT) provides a ligand contact to GTP. The interval 449-453 (GITQH) is G2. The segment at 470–473 (DTPG) is G3. GTP-binding positions include 470–474 (DTPGH) and 524–527 (NKID). The G4 stretch occupies residues 524–527 (NKID). Residues 560 to 562 (SAK) form a G5 region.

Belongs to the TRAFAC class translation factor GTPase superfamily. Classic translation factor GTPase family. IF-2 subfamily.

Its subcellular location is the cytoplasm. In terms of biological role, one of the essential components for the initiation of protein synthesis. Protects formylmethionyl-tRNA from spontaneous hydrolysis and promotes its binding to the 30S ribosomal subunits. Also involved in the hydrolysis of GTP during the formation of the 70S ribosomal complex. In Xanthomonas campestris pv. campestris (strain ATCC 33913 / DSM 3586 / NCPPB 528 / LMG 568 / P 25), this protein is Translation initiation factor IF-2.